We begin with the raw amino-acid sequence, 345 residues long: uncharacterized protein (345 aa).

Disordered stretches follow at residues 1 to 58 (MPSP…WRGD) and 139 to 165 (KTNS…NSPK). Basic and acidic residues predominate over residues 27–39 (IKGEGSDDGKEKS). Positions 154-165 (KQGSAESKNSPK) are enriched in polar residues.

Belongs to the MG307/MG309/MG338 family.

This is an uncharacterized protein from Mycoplasma pneumoniae (strain ATCC 29342 / M129 / Subtype 1) (Mycoplasmoides pneumoniae).